Here is a 512-residue protein sequence, read N- to C-terminus: MSQVYRSTRSSSEDTKSFEEAVIQGLAEDGGLFLPAVIPRLREETLFEHWAHLSFQDLAMEIMKFYIADWEIPAPELRELIERSYSSFRSEEVTPLRKNVTGDDENLHILELFHGPTYAFKDVALQFVGNLFEYFLERKNRDVSEEERTHLTVVGATSGDTGSAAIYGLRGKQDVSVFILYPHGRISPIQEEQMTTVEDENVHTMAIEGSFDNCQDIVKSIFVDEEFNRKHNIAAVNSINWARILAQITYYFYSYFRATDGQPGRVKFIVPSGNFGDILAGFYAKQMGLPIEKLVIATNENDILDRFLREGVYERSEDVTATHSPAMDILVSSNFERLLWFFAREQLAQGDDQEAGSIVNRWFEQLREERRFDVPEHLLDAIRYHFDSERVDNYNTLASIRHIYEHAQNPERYVIDPHTAVGICAANRQIAHDQNNEIHYISLATAHPAKFADAVNEALSSYDDYNFDDVLPDRLRRLGDLEKRIKYVDNTDVDVIKSIIEEELINMGIYNP.

Lys-121 carries the post-translational modification N6-(pyridoxal phosphate)lysine. The pyridoxal 5'-phosphate site is built by Gly-273, Asn-274, Phe-275, Asp-277, and Thr-445.

It belongs to the threonine synthase family. Pyridoxal 5'-phosphate serves as cofactor.

It catalyses the reaction O-phospho-L-homoserine + H2O = L-threonine + phosphate. The protein operates within amino-acid biosynthesis; L-threonine biosynthesis; L-threonine from L-aspartate: step 5/5. Catalyzes the gamma-elimination of phosphate from L-phosphohomoserine and the beta-addition of water to produce L-threonine. The polypeptide is Threonine synthase (THR4) (Eremothecium gossypii (strain ATCC 10895 / CBS 109.51 / FGSC 9923 / NRRL Y-1056) (Yeast)).